The chain runs to 189 residues: Elongation factor P (189 aa).

The protein belongs to the elongation factor P family.

Its subcellular location is the cytoplasm. Its pathway is protein biosynthesis; polypeptide chain elongation. Its function is as follows. Involved in peptide bond synthesis. Stimulates efficient translation and peptide-bond synthesis on native or reconstituted 70S ribosomes in vitro. Probably functions indirectly by altering the affinity of the ribosome for aminoacyl-tRNA, thus increasing their reactivity as acceptors for peptidyl transferase. The chain is Elongation factor P from Pseudomonas putida (strain ATCC 700007 / DSM 6899 / JCM 31910 / BCRC 17059 / LMG 24140 / F1).